The following is a 313-amino-acid chain: Putative serine protease 29 (313 aa).

Pro residues predominate over residues 1–22 (MPTTPDPGSEPPARTPRPPPLT). Residues 1 to 27 (MPTTPDPGSEPPARTPRPPPLTPGLSP) are disordered. The 243-residue stretch at 68-310 (IVGGHNAPPG…YVPWILQQVG (243 aa)) folds into the Peptidase S1 domain. Cysteines 99 and 115 form a disulfide. Residue His114 is the Charge relay system of the active site. An N-linked (GlcNAc...) asparagine glycan is attached at Asn143. Asp161 serves as the catalytic Charge relay system. Cystine bridges form between Cys193/Cys268, Cys226/Cys249, and Cys258/Cys286. Ser262 functions as the Charge relay system in the catalytic mechanism.

The protein belongs to the peptidase S1 family.

It localises to the secreted. This is Putative serine protease 29 (PRSS29P) from Homo sapiens (Human).